The primary structure comprises 275 residues: Anthracycline biosynthesis protein DnrV (275 aa).

2 consecutive VOC domains span residues 8–136 (APAW…VWRK) and 150–263 (SVGW…VVEL).

It participates in antibiotic biosynthesis; daunorubicin biosynthesis. Its pathway is antibiotic biosynthesis; carminomycin biosynthesis. Involved in the biosynthesis of the anthracyclines carminomycin and daunorubicin (daunomycin) which are aromatic polyketide antibiotics that exhibit high cytotoxicity and are widely applied in the chemotherapy of a variety of cancers. In vivo, it acts jointly with DoxA in the conversion of 13-deoxycarminomycin and 13-deoxydaunorubicin to yield carminomycin and daunorubicin, respectively. In vitro, it also acts jointly with DoxA in the C-14 hydroxylation of daunorubicin to form doxorubicin, although this strain is not a doxorubicin producer. The chain is Anthracycline biosynthesis protein DnrV (dnrV) from Streptomyces peucetius.